A 220-amino-acid polypeptide reads, in one-letter code: MNKVDYRLNALVDASLADVAPLPELALAAALNGATILQYRDKHGSTREMIENARAIREAIGGTGVPLVINDRVDVALASGADGVHLGADDMDAKTARRILGEKAIIGLTVKNRADAERAASMPADYACIGGVFETVSKVNPDKPVGIEGFTTLRALLKEWQPDMPVGAIAGIDLDRVPAVIAAGADGVAVISAIFRAANIASATSDFRSAIDAALKARQP.

4-amino-2-methyl-5-(diphosphooxymethyl)pyrimidine-binding positions include 38 to 42 (QYRDK) and N70. Residues D71 and D90 each coordinate Mg(2+). T109 contacts 4-amino-2-methyl-5-(diphosphooxymethyl)pyrimidine. Residue 135-137 (TVS) participates in 2-[(2R,5Z)-2-carboxy-4-methylthiazol-5(2H)-ylidene]ethyl phosphate binding. Residue K138 participates in 4-amino-2-methyl-5-(diphosphooxymethyl)pyrimidine binding. Residues G171 and 191-192 (IS) each bind 2-[(2R,5Z)-2-carboxy-4-methylthiazol-5(2H)-ylidene]ethyl phosphate.

Belongs to the thiamine-phosphate synthase family. Mg(2+) is required as a cofactor.

It catalyses the reaction 2-[(2R,5Z)-2-carboxy-4-methylthiazol-5(2H)-ylidene]ethyl phosphate + 4-amino-2-methyl-5-(diphosphooxymethyl)pyrimidine + 2 H(+) = thiamine phosphate + CO2 + diphosphate. The catalysed reaction is 2-(2-carboxy-4-methylthiazol-5-yl)ethyl phosphate + 4-amino-2-methyl-5-(diphosphooxymethyl)pyrimidine + 2 H(+) = thiamine phosphate + CO2 + diphosphate. It carries out the reaction 4-methyl-5-(2-phosphooxyethyl)-thiazole + 4-amino-2-methyl-5-(diphosphooxymethyl)pyrimidine + H(+) = thiamine phosphate + diphosphate. Its pathway is cofactor biosynthesis; thiamine diphosphate biosynthesis; thiamine phosphate from 4-amino-2-methyl-5-diphosphomethylpyrimidine and 4-methyl-5-(2-phosphoethyl)-thiazole: step 1/1. In terms of biological role, condenses 4-methyl-5-(beta-hydroxyethyl)thiazole monophosphate (THZ-P) and 2-methyl-4-amino-5-hydroxymethyl pyrimidine pyrophosphate (HMP-PP) to form thiamine monophosphate (TMP). The chain is Thiamine-phosphate synthase from Agrobacterium fabrum (strain C58 / ATCC 33970) (Agrobacterium tumefaciens (strain C58)).